Consider the following 798-residue polypeptide: Penicillin-binding protein 1A (798 aa).

Over 1–9 (MIKKILTTC) the chain is Cytoplasmic. Residues 10–30 (FGLVFGFCVFGVGLVAIAILV) form a helical; Signal-anchor for type II membrane protein membrane-spanning segment. At 31 to 798 (TYPKLPSLDS…SKQQQLDSLF (768 aa)) the chain is on the periplasmic side. The transglycosylase stretch occupies residues 50-218 (LTIYSADGEV…SAYNPIVNPE (169 aa)). The active-site Proton donor; for transglycosylase activity is the Glu88. The interval 378–700 (RRALGFAARA…GTIAVPVWVD (323 aa)) is transpeptidase. The active-site Acyl-ester intermediate; for transpeptidase activity is the Ser461. Positions 738-798 (GLTLDNSGIA…SKQQQLDSLF (61 aa)) are disordered. The segment covering 768 to 777 (AADDEVRQDM) has biased composition (basic and acidic residues). Positions 783–798 (LPSNTGSKQQQLDSLF) are enriched in polar residues.

This sequence in the N-terminal section; belongs to the glycosyltransferase 51 family. The protein in the C-terminal section; belongs to the transpeptidase family.

Its subcellular location is the cell inner membrane. It catalyses the reaction [GlcNAc-(1-&gt;4)-Mur2Ac(oyl-L-Ala-gamma-D-Glu-L-Lys-D-Ala-D-Ala)](n)-di-trans,octa-cis-undecaprenyl diphosphate + beta-D-GlcNAc-(1-&gt;4)-Mur2Ac(oyl-L-Ala-gamma-D-Glu-L-Lys-D-Ala-D-Ala)-di-trans,octa-cis-undecaprenyl diphosphate = [GlcNAc-(1-&gt;4)-Mur2Ac(oyl-L-Ala-gamma-D-Glu-L-Lys-D-Ala-D-Ala)](n+1)-di-trans,octa-cis-undecaprenyl diphosphate + di-trans,octa-cis-undecaprenyl diphosphate + H(+). It carries out the reaction Preferential cleavage: (Ac)2-L-Lys-D-Ala-|-D-Ala. Also transpeptidation of peptidyl-alanyl moieties that are N-acyl substituents of D-alanine.. The protein operates within cell wall biogenesis; peptidoglycan biosynthesis. Cell wall formation. Synthesis of cross-linked peptidoglycan from the lipid intermediates. The enzyme has a penicillin-insensitive transglycosylase N-terminal domain (formation of linear glycan strands) and a penicillin-sensitive transpeptidase C-terminal domain (cross-linking of the peptide subunits). This Neisseria meningitidis serogroup A / serotype 4A (strain DSM 15465 / Z2491) protein is Penicillin-binding protein 1A (mrcA).